The following is a 104-amino-acid chain: Large ribosomal subunit protein uL24 (104 aa).

It belongs to the universal ribosomal protein uL24 family. In terms of assembly, part of the 50S ribosomal subunit.

Its function is as follows. One of two assembly initiator proteins, it binds directly to the 5'-end of the 23S rRNA, where it nucleates assembly of the 50S subunit. In terms of biological role, one of the proteins that surrounds the polypeptide exit tunnel on the outside of the subunit. The chain is Large ribosomal subunit protein uL24 from Idiomarina loihiensis (strain ATCC BAA-735 / DSM 15497 / L2-TR).